The primary structure comprises 341 residues: Holliday junction branch migration complex subunit RuvB (341 aa).

Positions 1–182 (MKDRLISAVA…FGVISRLEYY (182 aa)) are large ATPase domain (RuvB-L). ATP contacts are provided by residues leucine 21, arginine 22, glycine 63, lysine 66, threonine 67, threonine 68, 129 to 131 (EDY), arginine 172, tyrosine 182, and arginine 219. Threonine 67 contributes to the Mg(2+) binding site. Residues 183–253 (RPEDLVLIVN…VAVEALKFLE (71 aa)) are small ATPAse domain (RuvB-S). The tract at residues 256–341 (PLGLDFADRR…REETDQVSLW (86 aa)) is head domain (RuvB-H). 2 residues coordinate DNA: arginine 311 and arginine 316.

It belongs to the RuvB family. As to quaternary structure, homohexamer. Forms an RuvA(8)-RuvB(12)-Holliday junction (HJ) complex. HJ DNA is sandwiched between 2 RuvA tetramers; dsDNA enters through RuvA and exits via RuvB. An RuvB hexamer assembles on each DNA strand where it exits the tetramer. Each RuvB hexamer is contacted by two RuvA subunits (via domain III) on 2 adjacent RuvB subunits; this complex drives branch migration. In the full resolvosome a probable DNA-RuvA(4)-RuvB(12)-RuvC(2) complex forms which resolves the HJ.

Its subcellular location is the cytoplasm. It carries out the reaction ATP + H2O = ADP + phosphate + H(+). Functionally, the RuvA-RuvB-RuvC complex processes Holliday junction (HJ) DNA during genetic recombination and DNA repair, while the RuvA-RuvB complex plays an important role in the rescue of blocked DNA replication forks via replication fork reversal (RFR). RuvA specifically binds to HJ cruciform DNA, conferring on it an open structure. The RuvB hexamer acts as an ATP-dependent pump, pulling dsDNA into and through the RuvAB complex. RuvB forms 2 homohexamers on either side of HJ DNA bound by 1 or 2 RuvA tetramers; 4 subunits per hexamer contact DNA at a time. Coordinated motions by a converter formed by DNA-disengaged RuvB subunits stimulates ATP hydrolysis and nucleotide exchange. Immobilization of the converter enables RuvB to convert the ATP-contained energy into a lever motion, pulling 2 nucleotides of DNA out of the RuvA tetramer per ATP hydrolyzed, thus driving DNA branch migration. The RuvB motors rotate together with the DNA substrate, which together with the progressing nucleotide cycle form the mechanistic basis for DNA recombination by continuous HJ branch migration. Branch migration allows RuvC to scan DNA until it finds its consensus sequence, where it cleaves and resolves cruciform DNA. This Pelotomaculum thermopropionicum (strain DSM 13744 / JCM 10971 / SI) protein is Holliday junction branch migration complex subunit RuvB.